Here is a 464-residue protein sequence, read N- to C-terminus: E3 ubiquitin-protein ligase RNF38 (464 aa).

A disordered region spans residues 1–94 (MRESEDSPSP…NSISQDENYH (94 aa)). The Bipartite nuclear localization signal 1 signature appears at 6–20 (DSPSPKRQRLSHSVF). Over residues 38-53 (MTSNRQPPSVRPNQHH) the composition is skewed to polar residues. The short motif at 64–79 (RNRRSPPVRRQRGRRE) is the Bipartite nuclear localization signal 2 element. Basic residues predominate over residues 64–83 (RNRRSPPVRRQRGRRERLSR). Residues 412 to 453 (CVVCMCDFESRQLLRVLPCNHEFHAKCVDKWLKGNRTCPICR) form an RING-type zinc finger.

The protein resides in the nucleus. It carries out the reaction S-ubiquitinyl-[E2 ubiquitin-conjugating enzyme]-L-cysteine + [acceptor protein]-L-lysine = [E2 ubiquitin-conjugating enzyme]-L-cysteine + N(6)-ubiquitinyl-[acceptor protein]-L-lysine.. The protein operates within protein modification; protein ubiquitination. Functionally, acts as an E3 ubiquitin-protein ligase able to ubiquitinate p53/TP53 which promotes its relocalization to discrete foci associated with PML nuclear bodies. Exhibits preference for UBE2D2 as a E2 enzyme. The chain is E3 ubiquitin-protein ligase RNF38 from Mus musculus (Mouse).